Here is a 122-residue protein sequence, read N- to C-terminus: Acidic phospholipase A2 (122 aa).

7 disulfide bridges follow: Cys-26–Cys-115, Cys-28–Cys-44, Cys-43–Cys-95, Cys-49–Cys-122, Cys-50–Cys-88, Cys-57–Cys-81, and Cys-75–Cys-86. 3 residues coordinate Ca(2+): Tyr-27, Gly-29, and Gly-31. His-47 is an active-site residue. Asp-48 contacts Ca(2+). Asp-89 is an active-site residue.

May form tetramers. The cofactor is Ca(2+). Expressed by the venom gland.

The protein resides in the secreted. The enzyme catalyses a 1,2-diacyl-sn-glycero-3-phosphocholine + H2O = a 1-acyl-sn-glycero-3-phosphocholine + a fatty acid + H(+). In terms of biological role, PLA2 catalyzes the calcium-dependent hydrolysis of the 2-acyl groups in 3-sn-phosphoglycerides. In vivo, is non-lethal to mice when intravenously injected up to a concentration of 30 ug, however does show significant edematogenic activity at the injection site. This Lachesis acrochorda (Chocoan bushmaster) protein is Acidic phospholipase A2.